We begin with the raw amino-acid sequence, 173 residues long: uncharacterized protein (173 aa).

Disordered regions lie at residues 1 to 23 (MGDL…GDVA) and 48 to 173 (TGAA…APQR). Residues 49 to 60 (GAAPGSAQAGPP) show a composition bias toward low complexity. Pro residues predominate over residues 70–83 (PRGPQAPPRLPPSL). Positions 123 to 136 (PACAGSSAPGSPAA) are enriched in low complexity.

This is an uncharacterized protein from Homo sapiens (Human).